We begin with the raw amino-acid sequence, 88 residues long: Small integral membrane protein 13 (88 aa).

The chain crosses the membrane as a helical span at residues 10 to 30 (LVFVATLLIVLLLMVCGWYFV). Residues 48-60 (TGSQEGDNEQPSG) are compositionally biased toward polar residues. The segment at 48 to 88 (TGSQEGDNEQPSGSEAEEDPSASPHKMRSARQRRPPVDDGH) is disordered. Phosphoserine is present on residues S59, S61, and S70. Over residues 72 to 81 (HKMRSARQRR) the composition is skewed to basic residues.

The protein belongs to the SMIM13 family.

It localises to the membrane. The chain is Small integral membrane protein 13 (Smim13) from Rattus norvegicus (Rat).